The chain runs to 458 residues: Hyaluronidase conohyal-P1 (458 aa).

The first 18 residues, 1-18 (MRVVVVVTGLVVVVVATA), serve as a signal peptide directing secretion. Residues 24–47 (HDVKSASSPLSSSSVYQGSSGDDC) are disordered. A compositionally biased stretch (low complexity) spans 28 to 43 (SASSPLSSSSVYQGSS). Cys68 and Cys342 are disulfide-bonded. N-linked (GlcNAc...) asparagine glycosylation is found at Asn106 and Asn141. Catalysis depends on Glu151, which acts as the Proton donor. Asn261, Asn337, and Asn359 each carry an N-linked (GlcNAc...) asparagine glycan. The region spanning 363–434 (VMADCSTTLC…VRPSRCHKQQ (72 aa)) is the EGF-like domain. Intrachain disulfides connect Cys367–Cys378, Cys372–Cys411, and Cys413–Cys422.

Belongs to the glycosyl hydrolase 56 family. Expressed by the venom duct.

It localises to the secreted. It carries out the reaction Random hydrolysis of (1-&gt;4)-linkages between N-acetyl-beta-D-glucosamine and D-glucuronate residues in hyaluronate.. In terms of biological role, hyaluronidase catalyzes the hydrolysis of hyaluronic acid (HA), an anionic, nonsulfated glycosaminoglycan distributed widely throughout connective, epithelial, and neural tissues. In venom, they are known to enhance diffusion of the venom by degrading the extracellular matrix. The protein is Hyaluronidase conohyal-P1 of Conus purpurascens (Purple cone).